The following is a 264-amino-acid chain: Proliferating cell nuclear antigen 2 (264 aa).

Residues 61–80 (RCDRNLSMGMNLGNMSKMLK) mediate DNA binding.

The protein belongs to the PCNA family. As to quaternary structure, homo- and heterotrimer. Interacts with POLH, ATXR5 and ATXR6.

It localises to the nucleus. In terms of biological role, this protein is an auxiliary protein of DNA polymerase delta and is involved in the control of eukaryotic DNA replication by increasing the polymerase's processibility during elongation of the leading strand. May be involved in UV resistance. The chain is Proliferating cell nuclear antigen 2 (PCNA2) from Arabidopsis thaliana (Mouse-ear cress).